A 279-amino-acid chain; its full sequence is Large ribosomal subunit protein uL2 (279 aa).

Disordered regions lie at residues 34–55 (LAPLKKSGGRNRAGRITSRHKG) and 221–279 (RGMA…RKAK). Basic residues predominate over residues 40-55 (SGGRNRAGRITSRHKG). The span at 232-242 (MGGGEGRSKSG) shows a compositional bias: gly residues. The span at 259-279 (LKTRNKKKASSKLIVRGRKAK) shows a compositional bias: basic residues.

This sequence belongs to the universal ribosomal protein uL2 family. As to quaternary structure, part of the 50S ribosomal subunit. Forms a bridge to the 30S subunit in the 70S ribosome.

Functionally, one of the primary rRNA binding proteins. Required for association of the 30S and 50S subunits to form the 70S ribosome, for tRNA binding and peptide bond formation. It has been suggested to have peptidyltransferase activity; this is somewhat controversial. Makes several contacts with the 16S rRNA in the 70S ribosome. The sequence is that of Large ribosomal subunit protein uL2 from Chlorobium phaeobacteroides (strain BS1).